The chain runs to 277 residues: Large ribosomal subunit protein uL2 (277 aa).

The disordered stretch occupies residues 219 to 277; sequence TVRGSVMNPNDHPHGGGEGRSPIGHPSPRTPWGKPALGYKTRKNKKYSDRFIVKRRHDK.

It belongs to the universal ribosomal protein uL2 family. Part of the 50S ribosomal subunit. Forms a bridge to the 30S subunit in the 70S ribosome.

Functionally, one of the primary rRNA binding proteins. Required for association of the 30S and 50S subunits to form the 70S ribosome, for tRNA binding and peptide bond formation. It has been suggested to have peptidyltransferase activity; this is somewhat controversial. Makes several contacts with the 16S rRNA in the 70S ribosome. The sequence is that of Large ribosomal subunit protein uL2 from Clostridium botulinum (strain Okra / Type B1).